Consider the following 363-residue polypeptide: Phosphoserine aminotransferase (363 aa).

An L-glutamate-binding site is contributed by Arg-42. Pyridoxal 5'-phosphate is bound by residues 76–77 (GR), Trp-102, Thr-156, Asp-175, and Gln-198. Position 199 is an N6-(pyridoxal phosphate)lysine (Lys-199). 240–241 (NT) is a pyridoxal 5'-phosphate binding site.

The protein belongs to the class-V pyridoxal-phosphate-dependent aminotransferase family. SerC subfamily. As to quaternary structure, homodimer. Requires pyridoxal 5'-phosphate as cofactor.

It is found in the cytoplasm. It catalyses the reaction O-phospho-L-serine + 2-oxoglutarate = 3-phosphooxypyruvate + L-glutamate. The catalysed reaction is 4-(phosphooxy)-L-threonine + 2-oxoglutarate = (R)-3-hydroxy-2-oxo-4-phosphooxybutanoate + L-glutamate. The protein operates within amino-acid biosynthesis; L-serine biosynthesis; L-serine from 3-phospho-D-glycerate: step 2/3. It functions in the pathway cofactor biosynthesis; pyridoxine 5'-phosphate biosynthesis; pyridoxine 5'-phosphate from D-erythrose 4-phosphate: step 3/5. Functionally, catalyzes the reversible conversion of 3-phosphohydroxypyruvate to phosphoserine and of 3-hydroxy-2-oxo-4-phosphonooxybutanoate to phosphohydroxythreonine. This is Phosphoserine aminotransferase from Shewanella baltica (strain OS185).